The primary structure comprises 504 residues: Acid phosphatase A (504 aa).

Positions 1-22 (MYTLLDILKGLPLLAVAAIASA) are cleaved as a signal peptide. Asn84, Asn112, Asn168, Asn260, Asn415, Asn450, and Asn474 each carry an N-linked (GlcNAc...) asparagine glycan.

The protein belongs to the metallophosphoesterase superfamily. Purple acid phosphatase family. As to quaternary structure, monomer.

It is found in the secreted. The enzyme catalyses a phosphate monoester + H2O = an alcohol + phosphate. Acid phosphatase involved in the regulation of fungal phenotypic traits and virulence in C.parasitica. The polypeptide is Acid phosphatase A (Cryphonectria parasitica (strain ATCC 38755 / EP155)).